The primary structure comprises 234 residues: tRNA (guanine-N(1)-)-methyltransferase (234 aa).

S-adenosyl-L-methionine-binding positions include Gly-115 and 135–140; that span reads VGDYIL.

Belongs to the RNA methyltransferase TrmD family. As to quaternary structure, homodimer.

It localises to the cytoplasm. It carries out the reaction guanosine(37) in tRNA + S-adenosyl-L-methionine = N(1)-methylguanosine(37) in tRNA + S-adenosyl-L-homocysteine + H(+). Functionally, specifically methylates guanosine-37 in various tRNAs. This chain is tRNA (guanine-N(1)-)-methyltransferase, found in Rickettsia peacockii (strain Rustic).